The sequence spans 365 residues: tRNA/tmRNA (uracil-C(5))-methyltransferase (365 aa).

Residues Gln189, Tyr217, Asn222, Glu238, and Asp298 each coordinate S-adenosyl-L-methionine. The active-site Nucleophile is Cys323. The active-site Proton acceptor is the Glu357.

Belongs to the class I-like SAM-binding methyltransferase superfamily. RNA M5U methyltransferase family. TrmA subfamily.

The catalysed reaction is uridine(54) in tRNA + S-adenosyl-L-methionine = 5-methyluridine(54) in tRNA + S-adenosyl-L-homocysteine + H(+). It catalyses the reaction uridine(341) in tmRNA + S-adenosyl-L-methionine = 5-methyluridine(341) in tmRNA + S-adenosyl-L-homocysteine + H(+). Dual-specificity methyltransferase that catalyzes the formation of 5-methyluridine at position 54 (m5U54) in all tRNAs, and that of position 341 (m5U341) in tmRNA (transfer-mRNA). This is tRNA/tmRNA (uracil-C(5))-methyltransferase from Shewanella woodyi (strain ATCC 51908 / MS32).